Here is a 248-residue protein sequence, read N- to C-terminus: Probable transcriptional regulatory protein FTM_1203 (248 aa).

Belongs to the TACO1 family.

Its subcellular location is the cytoplasm. This is Probable transcriptional regulatory protein FTM_1203 from Francisella tularensis subsp. mediasiatica (strain FSC147).